A 142-amino-acid chain; its full sequence is Probable pilin MJ0832.1 (142 aa).

Residues 1 to 8 (MLKFRKRG) constitute a propeptide that is removed on maturation. A QXSXEXXXL motif is present at residues 9 to 17 (QISLEFSLL).

Post-translationally, the N-terminus is cleaved by the prepilin peptidase EppA, which recognizes the class III signal sequence.

The protein localises to the secreted. Its subcellular location is the cell surface. The protein resides in the fimbrium. The chain is Probable pilin MJ0832.1 from Methanocaldococcus jannaschii (strain ATCC 43067 / DSM 2661 / JAL-1 / JCM 10045 / NBRC 100440) (Methanococcus jannaschii).